Reading from the N-terminus, the 237-residue chain is 3-oxoacyl-[acyl-carrier-protein] reductase (237 aa).

N-acetylmethionine is present on M1. NADP(+) is bound by residues 11–14, 34–35, D56, and 83–85; these read SRGI, RN, and AAG. S135 serves as a coordination point for substrate. NADP(+) is bound by residues Y148, K152, and 181–183; that span reads IHT. Y148 acts as the Proton acceptor in catalysis. Residue K195 is modified to N6-acetyllysine.

It belongs to the short-chain dehydrogenases/reductases (SDR) family. In terms of assembly, homotetramer (in vitro). Heterotetramer with HSD17B8; contains two molecules each of HSD17B8 and CBR4. Does not form homotetramers when HSD17B8 is coexpressed, only heterotetramers (in vitro).

Its subcellular location is the mitochondrion matrix. It carries out the reaction a (3R)-hydroxyacyl-[ACP] + NADP(+) = a 3-oxoacyl-[ACP] + NADPH + H(+). The enzyme catalyses a quinone + NADPH + H(+) = a quinol + NADP(+). Its pathway is lipid metabolism; fatty acid biosynthesis. Its function is as follows. Component of the heterotetramer complex KAR (3-ketoacyl-[acyl carrier protein] reductase or 3-ketoacyl-[ACP] reductase) that forms part of the mitochondrial fatty acid synthase (mtFAS). Beta-subunit of the KAR heterotetramer complex, responsible for the 3-ketoacyl-ACP reductase activity of the mtFAS, reduces 3-oxoacyl-[ACP] to (3R)-hydroxyacyl-[ACP] in a NADPH-dependent manner with no chain length preference, thereby participating in mitochondrial fatty acid biosynthesis. The homotetramer has NADPH-dependent quinone reductase activity (in vitro), hence could play a role in protection against cytotoxicity of exogenous quinones. As a heterotetramer, it can also reduce 9,10-phenanthrenequinone, 1,4-benzoquinone and various other o-quinones and p-quinones (in vitro). This is 3-oxoacyl-[acyl-carrier-protein] reductase (CBR4) from Bos taurus (Bovine).